The sequence spans 682 residues: Potassium-transporting ATPase ATP-binding subunit (682 aa).

Transmembrane regions (helical) follow at residues 34 to 54 (PVMFIVWIGSLLTTFISIAMA), 62 to 82 (ALFSAAISAWLWVTVLFANFA), 219 to 239 (IALTILLIALTIVFLLATATL), and 254 to 274 (VLVALLVCLIPTTIGGLLSAI). D307 (4-aspartylphosphate intermediate) is an active-site residue. Residues D344, E348, 377 to 384 (FTAQSRMS), and K395 contribute to the ATP site. Mg(2+) contacts are provided by D518 and D522. 3 helical membrane-spanning segments follow: residues 588–608 (FAIIPAAFAATYPQLNALNIM), 616–636 (AILSAVIFNALIIVFLIPLAL), and 656–676 (IYGLGGLLVPFIGIKVIDLLL).

Belongs to the cation transport ATPase (P-type) (TC 3.A.3) family. Type IA subfamily. The system is composed of three essential subunits: KdpA, KdpB and KdpC.

It is found in the cell inner membrane. It carries out the reaction K(+)(out) + ATP + H2O = K(+)(in) + ADP + phosphate + H(+). Functionally, part of the high-affinity ATP-driven potassium transport (or Kdp) system, which catalyzes the hydrolysis of ATP coupled with the electrogenic transport of potassium into the cytoplasm. This subunit is responsible for energy coupling to the transport system and for the release of the potassium ions to the cytoplasm. The polypeptide is Potassium-transporting ATPase ATP-binding subunit (Escherichia coli (strain SMS-3-5 / SECEC)).